The primary structure comprises 466 residues: Polycomb group protein FIE1 (466 aa).

Over residues 1–10 the composition is skewed to basic residues; it reads MGPTSRNHKS. Residues 1–71 are disordered; that stretch reads MGPTSRNHKS…GEGEPQETVL (71 aa). Residues 31–49 show a composition bias toward low complexity; the sequence is SITASASASAFASPAVANS. WD repeat units follow at residues 167–209, 212–252, 258–298, 324–361, 374–414, and 421–460; these read DMNE…IYKS, GHGG…LILV, GHRH…EYVE, IHSN…ENPG, PECN…PVLI, and QVKS…TAPV.

Belongs to the WD repeat ESC family. Interacts with EZ1 and CLF. Component of the polycomb repressive complex 2 (PRC2), which methylates 'Lys-27' residues of histone H3 (H3K27me3), leading to transcriptional repression of the affected target gene. Expressed specifically in seed endosperm.

In terms of biological role, polycomb group (PcG) protein. PcG proteins act by forming multiprotein complexes, which are required to maintain the transcriptionally repressive state of homeotic genes throughout development. PcG proteins are not required to initiate repression, but to maintain it during later stages of development. They act via the methylation of histones, rendering chromatin heritably changed in its expressibility. Together with EZ1 and CLF forms a complex that is involved in gene transcriptional repression by trimethylation on histone H3 'Lys-27' (H3K27me3) of target genes. Involved in the regulation of embryo and seed endosperm development. FIE1-containing PcG complex in seed endosperm regulates the expression of various transcription factors by trimethylation on histone H3 'Lys-27' (H3K27me3) of target genes. Involved in the overall expression regulation of nutrient metabolism genes, such as prolamin synthesis and seed storage protein synthesis genes. Can regulate valine, leucine and isoleucine metabolism-related genes. The sequence is that of Polycomb group protein FIE1 from Oryza sativa subsp. japonica (Rice).